A 170-amino-acid polypeptide reads, in one-letter code: Flavodoxin (170 aa).

Residues 4–165 form the Flavodoxin-like domain; sequence IGLFYGTQTG…RIKTWVSQLK (162 aa).

Belongs to the flavodoxin family. The cofactor is FMN.

Functionally, low-potential electron donor to a number of redox enzymes. The protein is Flavodoxin (isiB) of Synechococcus elongatus (strain ATCC 33912 / PCC 7942 / FACHB-805) (Anacystis nidulans R2).